A 242-amino-acid chain; its full sequence is MSMLCYTLIIAFLIGIWAAPQSEDNVPLGSPATSDLSDTSCAQTHEGLKTSRNTDQRHPAPKKVDDQELGSVANIIVDPKLFQKRQFQSSRVLFSTQPPPLSRDEQSVEFLDNEDALNRNIQAKRQNHPVHDLGEHSVCDSISEWVTKTTATDIKGNTVTVEVDVNLNNEVYKQYFFETKCRNPNPVPSGCRGIDSRLWNSYCTTTQTFVKALTMEGNQASWRFIRIDTACVCVITKKTDNL.

The signal sequence occupies residues 1 to 18 (MSMLCYTLIIAFLIGIWA). Positions 19-125 (APQSEDNVPL…ALNRNIQAKR (107 aa)) are excised as a propeptide. Cystine bridges form between Cys-139-Cys-203, Cys-181-Cys-231, and Cys-191-Cys-233.

This sequence belongs to the NGF-beta family. Homodimer; non-covalently linked. As to expression, expressed by the venom gland.

The protein resides in the secreted. Nerve growth factor is important for the development and maintenance of the sympathetic and sensory nervous systems. It stimulates division and differentiation of sympathetic and embryonic sensory neurons as well as basal forebrain cholinergic neurons in the brain. Its relevance in the snake venom is not clear. However, it has been shown to inhibit metalloproteinase-dependent proteolysis of platelet glycoprotein Ib alpha, suggesting a metalloproteinase inhibition to prevent metalloprotease autodigestion and/or protection against prey proteases. Binds a lipid between the two protein chains in the homodimer. The lipid-bound form promotes histamine relase from mouse mast cells, contrary to the lipid-free form. The sequence is that of Venom nerve growth factor 1 from Pseudechis australis (Mulga snake).